A 569-amino-acid polypeptide reads, in one-letter code: Proline--tRNA ligase (569 aa).

Belongs to the class-II aminoacyl-tRNA synthetase family. ProS type 1 subfamily. As to quaternary structure, homodimer.

The protein resides in the cytoplasm. It carries out the reaction tRNA(Pro) + L-proline + ATP = L-prolyl-tRNA(Pro) + AMP + diphosphate. In terms of biological role, catalyzes the attachment of proline to tRNA(Pro) in a two-step reaction: proline is first activated by ATP to form Pro-AMP and then transferred to the acceptor end of tRNA(Pro). As ProRS can inadvertently accommodate and process non-cognate amino acids such as alanine and cysteine, to avoid such errors it has two additional distinct editing activities against alanine. One activity is designated as 'pretransfer' editing and involves the tRNA(Pro)-independent hydrolysis of activated Ala-AMP. The other activity is designated 'posttransfer' editing and involves deacylation of mischarged Ala-tRNA(Pro). The misacylated Cys-tRNA(Pro) is not edited by ProRS. The polypeptide is Proline--tRNA ligase (Legionella pneumophila (strain Lens)).